Consider the following 510-residue polypeptide: Cytochrome P450 monooxygenase AFLA_114810 (510 aa).

The signal sequence occupies residues methionine 1–alanine 17. Cysteine 444 contributes to the heme binding site.

The protein belongs to the cytochrome P450 family. Requires heme as cofactor.

It participates in secondary metabolite biosynthesis. Its function is as follows. Cytochrome P450 monooxygenase; part of the gene cluster 41 that mediates the biosynthesis of an extracellular and diffusible metabolite that is able to stimulate colony sclerotial production. The chain is Cytochrome P450 monooxygenase AFLA_114810 from Aspergillus flavus (strain ATCC 200026 / FGSC A1120 / IAM 13836 / NRRL 3357 / JCM 12722 / SRRC 167).